The primary structure comprises 952 residues: MDLRVGQRPPVEPPPEPTLLALQRPQRLHHHLFLAGLQQQRSVEPMRLSMDTPMPELQVGPQEQELRQLLHKDKSKRSAVASSVVKQKLAEVILKKQQAALERTVHPNSPGIPYRTLEPLETEGATRSMLSSFLPPVPSLPSDPPEHFPLRKTVSEPNLKLRYKPKKSLERRKNPLLRKESAPPSLRRRPAETLGDSSPSSSSTPASGCSSPNDSEHGPNPILGSEALLGQRLRLQETSVAPFALPTVSLLPAITLGLPAPARADSDRRTHPTLGPRGPILGSPHTPLFLPHGLEPEAGGTLPSRLQPILLLDPSGSHAPLLTVPGLGPLPFHFAQSLMTTERLSGSGLHWPLSRTRSEPLPPSATAPPPPGPMQPRLEQLKTHVQVIKRSAKPSEKPRLRQIPSAEDLETDGGGPGQVVDDGLEHRELGHGQPEARGPAPLQQHPQVLLWEQQRLAGRLPRGSTGDTVLLPLAQGGHRPLSRAQSSPAAPASLSAPEPASQARVLSSSETPARTLPFTTGLIYDSVMLKHQCSCGDNSRHPEHAGRIQSIWSRLQERGLRSQCECLRGRKASLEELQSVHSERHVLLYGTNPLSRLKLDNGKLAGLLAQRMFVMLPCGGVGVDTDTIWNELHSSNAARWAAGSVTDLAFKVASRELKNGFAVVRPPGHHADHSTAMGFCFFNSVAIACRQLQQQSKASKILIVDWDVHHGNGTQQTFYQDPSVLYISLHRHDDGNFFPGSGAVDEVGAGSGEGFNVNVAWAGGLDPPMGDPEYLAAFRIVVMPIAREFSPDLVLVSAGFDAAEGHPAPLGGYHVSAKCFGYMTQQLMNLAGGAVVLALEGGHDLTAICDASEACVAALLGNRVDPLSEEGWKQKPNLNAIRSLEAVIRVHSKYWGCMQRLASCPDSWVPRVPGADKEEVEAVTALASLSVGILAEDRPSEQLVEEEEPMNL.

2 transcription repression regions span residues Met-1–Arg-268 and Gly-218–Gly-546. The interval Ser-49–Pro-149 is interaction with MEF2A. Ser-109 is modified (phosphoserine). Disordered regions lie at residues Leu-130–Gly-224 and Pro-261–Ser-283. Residue Ser-155 is modified to Phosphoserine; by MARK2, MARK3 and PKD/PRKD1. Over residues Lys-167–Ser-181 the composition is skewed to basic and acidic residues. Ser-181 bears the Phosphoserine; by PKD/PRKD2 mark. Low complexity predominate over residues Ser-197–Pro-212. Ser-283 is subject to Phosphoserine. Thr-286 is modified (phosphothreonine). Disordered stretches follow at residues Leu-349–Arg-377, Lys-389–Pro-441, and Leu-460–Glu-510. Phosphoserine; by PKD/PRKD1 is present on Ser-358. The segment covering Pro-360–Met-374 has biased composition (pro residues). Phosphoserine occurs at positions 364, 405, 486, 487, and 507. Residues Ser-482–Ala-503 show a composition bias toward low complexity. A histone deacetylase region spans residues Pro-512–Asp-865. Residues Cys-533, Cys-535, and His-541 each coordinate Zn(2+). A Phosphoserine modification is found at Ser-595. Cys-618 provides a ligand contact to Zn(2+). Residue His-670 is part of the active site. Residues Asn-877 to Leu-952 form an interaction with SIN3A region. Positions Lys-917 to Leu-952 match the Nuclear export signal motif.

Belongs to the histone deacetylase family. HD type 2 subfamily. In terms of assembly, interacts with HDAC1, HDAC2, HDAC3, HDAC4, HDAC5, NCOR1, NCOR2, SIN3A, SIN3B, RBBP4, RBBP7, MTA1L1, SAP30 and MBD3. Interacts with KAT5 and EDNRA. Interacts with the 14-3-3 protein YWHAE, MEF2A, MEF2B and MEF2C. Interacts with ZMYND15. Interacts with KDM5B. Interacts with PML. Interacts with FOXP3. Interacts with RARA. Post-translationally, may be phosphorylated by CaMK1. Phosphorylated by the PKC kinases PKN1 and PKN2, impairing nuclear import. Phosphorylation at Ser-155 by MARK2, MARK3 and PRKD1 promotes interaction with 14-3-3 proteins and export from the nucleus. Phosphorylation at Ser-155 is a prerequisite for phosphorylation at Ser-181.

Its subcellular location is the nucleus. It is found in the cytoplasm. It carries out the reaction N(6)-acetyl-L-lysyl-[histone] + H2O = L-lysyl-[histone] + acetate. The enzyme catalyses N(6)-acetyl-L-lysyl-[protein] + H2O = L-lysyl-[protein] + acetate. Functionally, responsible for the deacetylation of lysine residues on the N-terminal part of the core histones (H2A, H2B, H3 and H4). Histone deacetylation gives a tag for epigenetic repression and plays an important role in transcriptional regulation, cell cycle progression and developmental events. Histone deacetylases act via the formation of large multiprotein complexes. Involved in muscle maturation by repressing transcription of myocyte enhancer factors such as MEF2A, MEF2B and MEF2C. During muscle differentiation, it shuttles into the cytoplasm, allowing the expression of myocyte enhancer factors. May be involved in Epstein-Barr virus (EBV) latency, possibly by repressing the viral BZLF1 gene. Positively regulates the transcriptional repressor activity of FOXP3. Serves as a corepressor of RARA, causing its deacetylation and inhibition of RARE DNA element binding. In association with RARA, plays a role in the repression of microRNA-10a and thereby in the inflammatory response. Also acetylates non-histone proteins, such as ALKBH5. The sequence is that of Histone deacetylase 7 (HDAC7) from Homo sapiens (Human).